Reading from the N-terminus, the 241-residue chain is LexA repressor (241 aa).

A DNA-binding region (H-T-H motif) is located at residues F41–Q61. Active-site for autocatalytic cleavage activity residues include S165 and K202.

This sequence belongs to the peptidase S24 family. As to quaternary structure, homodimer.

The enzyme catalyses Hydrolysis of Ala-|-Gly bond in repressor LexA.. Functionally, represses a number of genes involved in the response to DNA damage (SOS response), including recA and lexA. In the presence of single-stranded DNA, RecA interacts with LexA causing an autocatalytic cleavage which disrupts the DNA-binding part of LexA, leading to derepression of the SOS regulon and eventually DNA repair. The sequence is that of LexA repressor from Bifidobacterium longum (strain DJO10A).